We begin with the raw amino-acid sequence, 258 residues long: 5-oxoprolinase subunit A (258 aa).

This sequence belongs to the LamB/PxpA family. In terms of assembly, forms a complex composed of PxpA, PxpB and PxpC.

It catalyses the reaction 5-oxo-L-proline + ATP + 2 H2O = L-glutamate + ADP + phosphate + H(+). Functionally, catalyzes the cleavage of 5-oxoproline to form L-glutamate coupled to the hydrolysis of ATP to ADP and inorganic phosphate. The polypeptide is 5-oxoprolinase subunit A (Deinococcus radiodurans (strain ATCC 13939 / DSM 20539 / JCM 16871 / CCUG 27074 / LMG 4051 / NBRC 15346 / NCIMB 9279 / VKM B-1422 / R1)).